A 649-amino-acid polypeptide reads, in one-letter code: Protein mitoshell (649 aa).

The span at 167–176 shows a compositional bias: basic and acidic residues; sequence LRSEARKPRP. 3 disordered regions span residues 167–193, 389–414, and 485–512; these read LRSEARKPRPESVVPEESSISSLESGA, HGPSAFSTPNNQIRNNAASKGQEPTS, and ALPSQEIPNAPTPKSSPQSDRPRDVRSY. A compositionally biased stretch (low complexity) spans 177-191; it reads ESVVPEESSISSLES. 2 stretches are compositionally biased toward polar residues: residues 393 to 414 and 485 to 503; these read AFSTPNNQIRNNAASKGQEPTS and ALPSQEIPNAPTPKSSPQS.

In terms of biological role, required for male meiotic cytokinesis through its involvement in the regulation of mitochondrial aggregation and fusion, astral spindle assembly and contractile ring formation. The chain is Protein mitoshell from Drosophila melanogaster (Fruit fly).